We begin with the raw amino-acid sequence, 251 residues long: Derlin-1 (251 aa).

Position 2 is an N-acetylserine (Ser-2). Residues 2-15 (SDIGDWFRSIPAIT) lie on the Cytoplasmic side of the membrane. Residues 16-31 (RYWFAATVAVPLVGKL) form a helical membrane-spanning segment. Residues 32–69 (GLISPAYLFLWPEAFLYRFQIWRPITATFYFPVGPGTG) lie on the Lumenal side of the membrane. Residues 70 to 89 (FLYLVNLYFLYQYSTRLETG) form a helical membrane-spanning segment. Residues 90-94 (AFDGR) are Cytoplasmic-facing. A helical membrane pass occupies residues 95-115 (PADYLFMLLFNWICIVITGLA). At 116–122 (MDMQLLM) the chain is on the lumenal side. A helical transmembrane segment spans residues 123–137 (IPLIMSVLYVWAQLN). Topologically, residues 138–154 (RDMIVSFWFGTRFKACY) are cytoplasmic. The helical transmembrane segment at 155 to 166 (LPWVILGFNYII) threads the bilayer. At 167–170 (GGSV) the chain is on the lumenal side. A helical membrane pass occupies residues 171–189 (INELIGNLVGHLYFFLMFR). Over 190-251 (YPMDLGGRNF…WGQGFRLGDQ (62 aa)) the chain is Cytoplasmic. Position 201 is a phosphoserine (Ser-201). Thr-202 carries the phosphothreonine modification. Ser-226 carries the post-translational modification Phosphoserine. The tract at residues 229 to 251 (RAADQNGGGGRHNWGQGFRLGDQ) is disordered. The short motif at 241–248 (NWGQGFRL) is the SHP-box element.

Belongs to the derlin family. Homotetramer. The four subunits of the tetramer are arranged in a twofold symmetry. Forms heterooligomers with DERL2 and DERL3; binding to DERL3 is poorer than that between DERL2 and DERL3. Interacts (via SHP-box motif) with VCP. Interacts with AMFR, SELENOS, SEL1L, SELENOK and SYVN1, as well as with SEL1L-SYVN1 and VCP-SELENOS protein complexes; this interaction is weaker than that observed between DERL2 and these complexes. Interacts with NGLY1 and YOD1. Does not bind to EDEM1. Interacts with DNAJB9. Interacts with RNF103. Interacts with HM13. Interacts with XBP1 isoform 1 (via luminal/ectodomain domain); the interaction obviates the need for ectodomain shedding prior HM13/SPP-mediated XBP1 isoform 1 cleavage. Interacts with the signal recognition particle/SRP and the SRP receptor; in the process of endoplasmic reticulum stress-induced pre-emptive quality control. May interact with UBXN6. Interacts with ZFAND2B; probably through VCP. Interacts with CCDC47. Interacts with C18orf32. May interact with TRAM1. Forms a complex with SVIP and VCP/p97. In terms of assembly, (Microbial infection) Interacts with the cytomegalovirus US11 protein. Ubiquitous.

The protein resides in the endoplasmic reticulum membrane. In terms of biological role, functional component of endoplasmic reticulum-associated degradation (ERAD) for misfolded lumenal proteins. Forms homotetramers which encircle a large channel traversing the endoplasmic reticulum (ER) membrane. This allows the retrotranslocation of misfolded proteins from the ER into the cytosol where they are ubiquitinated and degraded by the proteasome. The channel has a lateral gate within the membrane which provides direct access to membrane proteins with no need to reenter the ER lumen first. May mediate the interaction between VCP and the misfolded protein. Also involved in endoplasmic reticulum stress-induced pre-emptive quality control, a mechanism that selectively attenuates the translocation of newly synthesized proteins into the endoplasmic reticulum and reroutes them to the cytosol for proteasomal degradation. By controlling the steady-state expression of the IGF1R receptor, indirectly regulates the insulin-like growth factor receptor signaling pathway. Functionally, (Microbial infection) In case of infection by cytomegaloviruses, it plays a central role in the export from the ER and subsequent degradation of MHC class I heavy chains via its interaction with US11 viral protein, which recognizes and associates with MHC class I heavy chains. Also participates in the degradation process of misfolded cytomegalovirus US2 protein. This is Derlin-1 from Homo sapiens (Human).